Here is a 411-residue protein sequence, read N- to C-terminus: Corticotropin-releasing factor receptor 2 (411 aa).

A signal peptide (not cleaved) is located at residues 1–19 (MDAALLHSLLEANCSLALA). At 1-108 (MDAALLHSLL…EPILDDKQRK (108 aa)) the chain is on the extracellular side. N13, N41, N74, N86, and N94 each carry an N-linked (GlcNAc...) asparagine glycan. Disulfide bonds link C14–C50, C40–C83, W51–R77, and C64–C98. A helical transmembrane segment spans residues 109 to 139 (YDLHYRIALVVNYLGHCVSVAALVAAFLLFL). Residues 140-146 (ALRSIRC) are Cytoplasmic-facing. A helical membrane pass occupies residues 147 to 171 (LRNVIHWNLITTFILRNVMWFLLQL). The Extracellular segment spans residues 172–185 (VDHEVHESNEVWCR). The cysteines at positions 184 and 254 are disulfide-linked. A helical transmembrane segment spans residues 186–214 (CITTIFNYFVVTNFFWMFVEGCYLHTAIV). The Cytoplasmic segment spans residues 215–221 (MTYSTER). Residues 222 to 249 (LRKCLFLFIGWCIPFPIIVAWAIGKLYY) traverse the membrane as a helical segment. Over 250–265 (ENEQCWFGKEPGDLVD) the chain is Extracellular. Residues 266–291 (YIYQGPIILVLLINFVFLFNIVRILM) form a helical membrane-spanning segment. The Cytoplasmic segment spans residues 292–302 (TKLRASTTSET). Residues 303-327 (IQYRKAVKATLVLLPLLGITYMLFF) form a helical membrane-spanning segment. The Extracellular segment spans residues 328–334 (VNPGEDD). Residues 335–364 (LSQIMFIYFNSFLQSFQGFFVSVFYCFFNG) traverse the membrane as a helical segment. Topologically, residues 365–411 (EVRSAVRKRWHRWQDHHSLRVPMARAMSIPTSPTRISFHSIKQTAAV) are cytoplasmic.

This sequence belongs to the G-protein coupled receptor 2 family. Monomer. Interacts (via N-terminal extracellular domain) with CRF, UCN, UCN2 and UCN3. Has highest affinity for UCN, and considerably lower affinity for CRF, UNC2 and UCN3. In terms of processing, a N-glycosylation site within the signal peptide impedes its proper cleavage and function.

It is found in the cell membrane. Its function is as follows. G-protein coupled receptor for CRH (corticotropin-releasing factor), UCN (urocortin), UCN2 and UCN3. Has high affinity for UCN. Ligand binding causes a conformation change that triggers signaling via guanine nucleotide-binding proteins (G proteins) and down-stream effectors, such as adenylate cyclase. Promotes the activation of adenylate cyclase, leading to increased intracellular cAMP levels. This Homo sapiens (Human) protein is Corticotropin-releasing factor receptor 2 (CRHR2).